The sequence spans 1158 residues: ATP-dependent helicase/deoxyribonuclease subunit B (1158 aa).

A UvrD-like helicase ATP-binding domain is found at 1–275; sequence MTLHAYLGRA…QYFNQLYRFN (275 aa). 8 to 15 contacts ATP; it reads GRAGTGKS. Residues 269–583 enclose the UvrD-like helicase C-terminal domain; the sequence is NQLYRFNNQD…SIGTMDLAKV (315 aa). Residues Cys-784, Cys-1112, Cys-1115, and Cys-1121 each coordinate [4Fe-4S] cluster.

It belongs to the helicase family. AddB/RexB type 1 subfamily. In terms of assembly, heterodimer of AddA and AddB. The cofactor is Mg(2+). It depends on [4Fe-4S] cluster as a cofactor.

In terms of biological role, the heterodimer acts as both an ATP-dependent DNA helicase and an ATP-dependent, dual-direction single-stranded exonuclease. Recognizes the chi site generating a DNA molecule suitable for the initiation of homologous recombination. The AddB subunit has 5' -&gt; 3' nuclease activity but not helicase activity. This chain is ATP-dependent helicase/deoxyribonuclease subunit B, found in Staphylococcus aureus (strain MRSA252).